The sequence spans 350 residues: Serine/arginine-rich splicing factor RS40 (350 aa).

2 consecutive RRM domains span residues 2-74 and 97-168; these read KPVF…WTKS and KTLF…YAVK. 2 stretches are compositionally biased toward basic and acidic residues: residues 73 to 82 and 167 to 187; these read KSERGGDKRS and VKDD…DRSP. Disordered regions lie at residues 73 to 94 and 167 to 350; these read KSER…SSMR and VKDD…PADE. 3 positions are modified to phosphoserine: Ser-193, Ser-195, and Ser-211. Basic and acidic residues-rich tracts occupy residues 216–227 and 240–255; these read YRKERTSPDYGR and GSPE…DSPR. Phosphoserine is present on residues Ser-241, Ser-262, Ser-278, Ser-298, Ser-308, Ser-335, and Ser-340. Residues 272-289 are compositionally biased toward basic and acidic residues; the sequence is NKRERMSPNHSPFKKESP. Over residues 299–308 the composition is skewed to basic and acidic residues; that stretch reads PIERRERSRS.

Belongs to the splicing factor SR family. RS subfamily. In terms of assembly, component of the spliceosome. Interacts with SNRNP35. Interacts with CYP59. Interacts with RCF3 and CPL1. Interacts with DRB1/HYL1 and SE. Highly expressed in roots and flowers. A presumably longer alternatively spliced form is found in leaves, stems and flowers.

It is found in the nucleus. The protein resides in the nucleus speckle. Functionally, required for constitutive and alternative pre-mRNA splicing. Involved in primary miRNA processing and pri-miRNA biogenesis. Binds both intronless and intron-containing pri-miRNAs. The chain is Serine/arginine-rich splicing factor RS40 (RS40) from Arabidopsis thaliana (Mouse-ear cress).